The following is a 473-amino-acid chain: Photosystem II CP43 reaction center protein (473 aa).

Positions 1–14 (MKILYSLRRFYHVE) are excised as a propeptide. An N-acetylthreonine modification is found at T15. T15 carries the post-translational modification Phosphothreonine. The next 5 helical transmembrane spans lie at 69–93 (LFEV…PHLA), 134–155 (LLGP…KDRN), 178–200 (KALY…RKIT), 255–275 (KPFA…LSYS), and 291–312 (WFNN…ASQA). Residue E367 coordinates [CaMn4O5] cluster. A helical membrane pass occupies residues 447-471 (RARAAAAGFEKGIDRDLEPVLYMNP).

It belongs to the PsbB/PsbC family. PsbC subfamily. As to quaternary structure, PSII is composed of 1 copy each of membrane proteins PsbA, PsbB, PsbC, PsbD, PsbE, PsbF, PsbH, PsbI, PsbJ, PsbK, PsbL, PsbM, PsbT, PsbX, PsbY, PsbZ, Psb30/Ycf12, at least 3 peripheral proteins of the oxygen-evolving complex and a large number of cofactors. It forms dimeric complexes. Binds multiple chlorophylls and provides some of the ligands for the Ca-4Mn-5O cluster of the oxygen-evolving complex. It may also provide a ligand for a Cl- that is required for oxygen evolution. PSII binds additional chlorophylls, carotenoids and specific lipids. serves as cofactor.

The protein resides in the plastid. The protein localises to the chloroplast thylakoid membrane. One of the components of the core complex of photosystem II (PSII). It binds chlorophyll and helps catalyze the primary light-induced photochemical processes of PSII. PSII is a light-driven water:plastoquinone oxidoreductase, using light energy to abstract electrons from H(2)O, generating O(2) and a proton gradient subsequently used for ATP formation. This Lolium perenne (Perennial ryegrass) protein is Photosystem II CP43 reaction center protein.